A 156-amino-acid chain; its full sequence is 6,7-dimethyl-8-ribityllumazine synthase (156 aa).

5-amino-6-(D-ribitylamino)uracil is bound by residues F22, 57-59, and 81-83; these read AVE and SVI. 86–87 serves as a coordination point for (2S)-2-hydroxy-3-oxobutyl phosphate; that stretch reads GT. H89 (proton donor) is an active-site residue. F114 lines the 5-amino-6-(D-ribitylamino)uracil pocket. R128 serves as a coordination point for (2S)-2-hydroxy-3-oxobutyl phosphate.

The protein belongs to the DMRL synthase family. Forms an icosahedral capsid composed of 60 subunits, arranged as a dodecamer of pentamers.

The enzyme catalyses (2S)-2-hydroxy-3-oxobutyl phosphate + 5-amino-6-(D-ribitylamino)uracil = 6,7-dimethyl-8-(1-D-ribityl)lumazine + phosphate + 2 H2O + H(+). The protein operates within cofactor biosynthesis; riboflavin biosynthesis; riboflavin from 2-hydroxy-3-oxobutyl phosphate and 5-amino-6-(D-ribitylamino)uracil: step 1/2. In terms of biological role, catalyzes the formation of 6,7-dimethyl-8-ribityllumazine by condensation of 5-amino-6-(D-ribitylamino)uracil with 3,4-dihydroxy-2-butanone 4-phosphate. This is the penultimate step in the biosynthesis of riboflavin. This is 6,7-dimethyl-8-ribityllumazine synthase from Aliivibrio fischeri (strain ATCC 700601 / ES114) (Vibrio fischeri).